The sequence spans 544 residues: Thermosome subunit (544 aa).

The protein belongs to the TCP-1 chaperonin family. Forms an oligomeric complex of eight-membered rings.

Molecular chaperone; binds unfolded polypeptides in vitro, and has a weak ATPase activity. This chain is Thermosome subunit (ths), found in Methanothermococcus thermolithotrophicus (Methanococcus thermolithotrophicus).